A 312-amino-acid polypeptide reads, in one-letter code: MTSAATTSDVVHARAPGKINVSLTVGALQEDGYHDVATAYQAVGLYEDVWATKADGFSVEFGGSIDTSHLTTGADNLAVRAARLLARSTGYRGGVHLRIEKNVPIAGGMGGGSADAAATLLACDTLWGTERTRDQLLALGAELGADVPFALAGGTAIGTGRGDRLSPALAKGTFQWVLAIAEFGVSTPDVYGELDKHRERHAQDIFPAQQIPQVDSGVLQALRAGDPHMLAEVLHNDLQAPALHLAPGLGEVLQLGEENGALAGIVSGSGPTVAFLAADLDSALELQIALSAARLTVIRATGPVHGARIITG.

Lys18 is a catalytic residue. ATP is bound at residue 104-114 (PIAGGMGGGSA). The active site involves Asp146.

It belongs to the GHMP kinase family. IspE subfamily.

The enzyme catalyses 4-CDP-2-C-methyl-D-erythritol + ATP = 4-CDP-2-C-methyl-D-erythritol 2-phosphate + ADP + H(+). The protein operates within isoprenoid biosynthesis; isopentenyl diphosphate biosynthesis via DXP pathway; isopentenyl diphosphate from 1-deoxy-D-xylulose 5-phosphate: step 3/6. Its function is as follows. Catalyzes the phosphorylation of the position 2 hydroxy group of 4-diphosphocytidyl-2C-methyl-D-erythritol. In Clavibacter michiganensis subsp. michiganensis (strain NCPPB 382), this protein is 4-diphosphocytidyl-2-C-methyl-D-erythritol kinase.